A 304-amino-acid chain; its full sequence is Acetylglutamate kinase (304 aa).

Substrate is bound by residues 77–78 (GG), R99, and N193.

Belongs to the acetylglutamate kinase family. ArgB subfamily.

It is found in the cytoplasm. The catalysed reaction is N-acetyl-L-glutamate + ATP = N-acetyl-L-glutamyl 5-phosphate + ADP. It participates in amino-acid biosynthesis; L-arginine biosynthesis; N(2)-acetyl-L-ornithine from L-glutamate: step 2/4. Functionally, catalyzes the ATP-dependent phosphorylation of N-acetyl-L-glutamate. The protein is Acetylglutamate kinase of Pelodictyon phaeoclathratiforme (strain DSM 5477 / BU-1).